We begin with the raw amino-acid sequence, 115 residues long: uncharacterized protein (115 aa).

This is an uncharacterized protein from Human cytomegalovirus (strain AD169) (HHV-5).